The following is a 362-amino-acid chain: Cobalt-precorrin-5B C(1)-methyltransferase (362 aa).

It belongs to the CbiD family.

It carries out the reaction Co-precorrin-5B + S-adenosyl-L-methionine = Co-precorrin-6A + S-adenosyl-L-homocysteine. Its pathway is cofactor biosynthesis; adenosylcobalamin biosynthesis; cob(II)yrinate a,c-diamide from sirohydrochlorin (anaerobic route): step 6/10. Functionally, catalyzes the methylation of C-1 in cobalt-precorrin-5B to form cobalt-precorrin-6A. This Burkholderia cenocepacia (strain ATCC BAA-245 / DSM 16553 / LMG 16656 / NCTC 13227 / J2315 / CF5610) (Burkholderia cepacia (strain J2315)) protein is Cobalt-precorrin-5B C(1)-methyltransferase.